Reading from the N-terminus, the 143-residue chain is MAPKKKKVAGLIKLQIQAGAANPAPPVGPALGQHGVNIMEFCKAYNAATESQRGNIVPVEITVYEDRSFSFITKTPPAAQLIKKAAGVAKGSGVPHTTKVGKITMDQVREIAETKKEDLNANDIDAAAKIIAGTARSMGIEVN.

This sequence belongs to the universal ribosomal protein uL11 family. As to quaternary structure, part of the ribosomal stalk of the 50S ribosomal subunit. Interacts with L10 and the large rRNA to form the base of the stalk. L10 forms an elongated spine to which L12 dimers bind in a sequential fashion forming a multimeric L10(L12)X complex. In terms of processing, one or more lysine residues are methylated.

Forms part of the ribosomal stalk which helps the ribosome interact with GTP-bound translation factors. This Kocuria rhizophila (strain ATCC 9341 / DSM 348 / NBRC 103217 / DC2201) protein is Large ribosomal subunit protein uL11.